A 501-amino-acid polypeptide reads, in one-letter code: Arabinose import ATP-binding protein AraG (501 aa).

ABC transporter domains are found at residues 4 to 239 and 252 to 495; these read LEFN…MVGR and LGDN…LPDK. 36–43 provides a ligand contact to ATP; the sequence is GENGAGKS.

It belongs to the ABC transporter superfamily. Arabinose importer (TC 3.A.1.2.2) family. In terms of assembly, the complex is composed of two ATP-binding proteins (AraG), two transmembrane proteins (AraH) and a solute-binding protein (AraF).

The protein localises to the cell inner membrane. The catalysed reaction is L-arabinose(out) + ATP + H2O = L-arabinose(in) + ADP + phosphate + H(+). In terms of biological role, part of the ABC transporter complex AraFGH involved in arabinose import. Responsible for energy coupling to the transport system. This Rhizobium etli (strain ATCC 51251 / DSM 11541 / JCM 21823 / NBRC 15573 / CFN 42) protein is Arabinose import ATP-binding protein AraG.